Here is a 375-residue protein sequence, read N- to C-terminus: Growth/differentiation factor 8 (375 aa).

The N-terminal stretch at 1–23 is a signal peptide; it reads MQKLQLCVYIYLFMLIVAGPVDL. Residues 24 to 266 constitute a propeptide that is removed on maturation; it reads NENSEQKENV…VTDTPKRSRR (243 aa). N-linked (GlcNAc...) asparagine glycosylation is present at N71. Intrachain disulfides connect C272-C282, C281-C340, C309-C372, and C313-C374.

This sequence belongs to the TGF-beta family. As to quaternary structure, homodimer; disulfide-linked. Interacts with WFIKKN2, leading to inhibit its activity. Interacts with FSTL3. In terms of processing, synthesized as large precursor molecule that undergoes proteolytic cleavage to generate an N-terminal propeptide and a disulfide linked C-terminal dimer, which is the biologically active molecule. The circulating form consists of a latent complex of the C-terminal dimer and other proteins, including its propeptide, which maintain the C-terminal dimer in a latent, inactive state. Ligand activation requires additional cleavage of the prodomain by a tolloid-like metalloproteinase.

Its subcellular location is the secreted. Functionally, acts specifically as a negative regulator of skeletal muscle growth. The protein is Growth/differentiation factor 8 (MSTN) of Pan paniscus (Pygmy chimpanzee).